Consider the following 719-residue polypeptide: Protein ENHANCED DISEASE RESISTANCE 2-like (719 aa).

The PH domain maps to 3 to 110; sequence KVVYEGWMVR…WKEKIECVID (108 aa). Positions 134 to 173 are disordered; that stretch reads AGRTASSSDHESPFSALEDENDSQRDLLRRTTIGNGPPES. The region spanning 180–392 is the START domain; sequence EFDAELSNQS…VSGLREWFSQ (213 aa). A disordered region spans residues 414–478; that stretch reads ALGKGGKHHH…ETDAKKTEEP (65 aa). Residues 426-439 are compositionally biased toward polar residues; that stretch reads SLSIDQTNGASRNS. The segment covering 442-461 has biased composition (acidic residues); it reads MDEDSDDDDEFQIPDSEPEP. Basic and acidic residues predominate over residues 462–477; the sequence is ETSKQDQETDAKKTEE. The chain crosses the membrane as a helical span at residues 665-685; that stretch reads GVLGLVIGVITSLVVEMAFLV.

It localises to the endoplasmic reticulum membrane. The protein localises to the cell membrane. It is found in the endosome membrane. Functionally, binds to phosphatidylinositol-4-phosphate (PtdIns(4)P). May regulate the salicylic acid- (SA-) mediated resistance to pathogens. The protein is Protein ENHANCED DISEASE RESISTANCE 2-like (EDR2L) of Arabidopsis thaliana (Mouse-ear cress).